A 242-amino-acid chain; its full sequence is Lactate utilization protein A 1 (242 aa).

It belongs to the LutA/YkgE family.

Is involved in L-lactate degradation and allows cells to grow with lactate as the sole carbon source. The polypeptide is Lactate utilization protein A 1 (Bacillus anthracis (strain CDC 684 / NRRL 3495)).